Reading from the N-terminus, the 82-residue chain is Histidine-rich protein (82 aa).

This Plasmodium falciparum (isolate fcm17 / Senegal) protein is Histidine-rich protein.